A 946-amino-acid chain; its full sequence is Glycine dehydrogenase (decarboxylating) (946 aa).

N6-(pyridoxal phosphate)lysine is present on Lys-700.

Belongs to the GcvP family. The glycine cleavage system is composed of four proteins: P, T, L and H. It depends on pyridoxal 5'-phosphate as a cofactor.

The catalysed reaction is N(6)-[(R)-lipoyl]-L-lysyl-[glycine-cleavage complex H protein] + glycine + H(+) = N(6)-[(R)-S(8)-aminomethyldihydrolipoyl]-L-lysyl-[glycine-cleavage complex H protein] + CO2. The glycine cleavage system catalyzes the degradation of glycine. The P protein binds the alpha-amino group of glycine through its pyridoxal phosphate cofactor; CO(2) is released and the remaining methylamine moiety is then transferred to the lipoamide cofactor of the H protein. The protein is Glycine dehydrogenase (decarboxylating) of Pseudomonas fluorescens (strain SBW25).